We begin with the raw amino-acid sequence, 394 residues long: Xylose isomerase (394 aa).

Catalysis depends on residues H54 and D57. Mg(2+) is bound by residues E181, E217, H220, D245, D255, D257, and D292.

This sequence belongs to the xylose isomerase family. In terms of assembly, homotetramer. The cofactor is Mg(2+).

It is found in the cytoplasm. It catalyses the reaction alpha-D-xylose = alpha-D-xylulofuranose. This is Xylose isomerase (xylA) from Actinoplanes missouriensis (strain ATCC 14538 / DSM 43046 / CBS 188.64 / JCM 3121 / NBRC 102363 / NCIMB 12654 / NRRL B-3342 / UNCC 431).